A 231-amino-acid chain; its full sequence is 7-cyano-7-deazaguanine synthase (231 aa).

8-18 (FSGGQDSTTCL) contacts ATP. Residues cysteine 188, cysteine 197, cysteine 200, and cysteine 203 each contribute to the Zn(2+) site.

This sequence belongs to the QueC family. Zn(2+) serves as cofactor.

The enzyme catalyses 7-carboxy-7-deazaguanine + NH4(+) + ATP = 7-cyano-7-deazaguanine + ADP + phosphate + H2O + H(+). The protein operates within purine metabolism; 7-cyano-7-deazaguanine biosynthesis. Its function is as follows. Catalyzes the ATP-dependent conversion of 7-carboxy-7-deazaguanine (CDG) to 7-cyano-7-deazaguanine (preQ(0)). The protein is 7-cyano-7-deazaguanine synthase of Escherichia coli O127:H6 (strain E2348/69 / EPEC).